The primary structure comprises 131 residues: Small ribosomal subunit protein uS8 (131 aa).

This sequence belongs to the universal ribosomal protein uS8 family. Part of the 30S ribosomal subunit. Contacts proteins S5 and S12.

Functionally, one of the primary rRNA binding proteins, it binds directly to 16S rRNA central domain where it helps coordinate assembly of the platform of the 30S subunit. The chain is Small ribosomal subunit protein uS8 from Methylobacillus flagellatus (strain ATCC 51484 / DSM 6875 / VKM B-1610 / KT).